We begin with the raw amino-acid sequence, 178 residues long: Oligoribonuclease (178 aa).

The Exonuclease domain maps to 7–168 (LIWIDLEMTG…DDIRESIAEL (162 aa)). Tyr-128 is a catalytic residue.

This sequence belongs to the oligoribonuclease family.

It is found in the cytoplasm. In terms of biological role, 3'-to-5' exoribonuclease specific for small oligoribonucleotides. In Francisella tularensis subsp. novicida (strain U112), this protein is Oligoribonuclease.